The chain runs to 438 residues: Serine hydroxymethyltransferase (438 aa).

(6S)-5,6,7,8-tetrahydrofolate contacts are provided by residues Leu133 and 137-139 (GHL). Lys242 bears the N6-(pyridoxal phosphate)lysine mark.

It belongs to the SHMT family. As to quaternary structure, homodimer. It depends on pyridoxal 5'-phosphate as a cofactor.

The protein resides in the cytoplasm. It catalyses the reaction (6R)-5,10-methylene-5,6,7,8-tetrahydrofolate + glycine + H2O = (6S)-5,6,7,8-tetrahydrofolate + L-serine. It participates in one-carbon metabolism; tetrahydrofolate interconversion. The protein operates within amino-acid biosynthesis; glycine biosynthesis; glycine from L-serine: step 1/1. Functionally, catalyzes the reversible interconversion of serine and glycine with tetrahydrofolate (THF) serving as the one-carbon carrier. This reaction serves as the major source of one-carbon groups required for the biosynthesis of purines, thymidylate, methionine, and other important biomolecules. Also exhibits THF-independent aldolase activity toward beta-hydroxyamino acids, producing glycine and aldehydes, via a retro-aldol mechanism. The sequence is that of Serine hydroxymethyltransferase from Brucella abortus (strain S19).